The chain runs to 319 residues: MAGRTARLVLLAGAAALASGSQGDREPVYRDCVLRCEERNCSGGALKHFRSRQPIYMSLAGWTCRDDCKYECMWVTVGLYLQEGQKVPQFHGKWPFSRFLCFQEPASAVASFLNGLASLVMLCRYRTSVPASSPMYPTCVAFAWVSLNAWFWSTVFHTRDTDLTEKMDYFCASTVILHSIYLCCVRTVGLQHPAMASAFRALLLLLLTAHVSYLSLIHFDYGYNMAANVAIGLLNAAWWLAWCLWNQRLPHVHKCVAVVLLLQGLSLLELLDFPPLFWVLDAHAIWHISTIPVHVLFFSFLEDDSLYLLKESEAKVKLD.

The N-terminal stretch at 1–23 (MAGRTARLVLLAGAAALASGSQG) is a signal peptide. Topologically, residues 24–101 (DREPVYRDCV…GKWPFSRFLC (78 aa)) are lumenal. An N-linked (GlcNAc...) asparagine glycan is attached at Asn40. The helical transmembrane segment at 102–122 (FQEPASAVASFLNGLASLVML) threads the bilayer. Residues 123-135 (CRYRTSVPASSPM) lie on the Cytoplasmic side of the membrane. The chain crosses the membrane as a helical span at residues 136 to 156 (YPTCVAFAWVSLNAWFWSTVF). Residues 157 to 169 (HTRDTDLTEKMDY) are Lumenal-facing. Residues 170 to 190 (FCASTVILHSIYLCCVRTVGL) traverse the membrane as a helical segment. Residues 191-200 (QHPAMASAFR) are Cytoplasmic-facing. A helical membrane pass occupies residues 201 to 221 (ALLLLLLTAHVSYLSLIHFDY). Topologically, residues 222–224 (GYN) are lumenal. The helical transmembrane segment at 225-245 (MAANVAIGLLNAAWWLAWCLW) threads the bilayer. Residues 246-257 (NQRLPHVHKCVA) are Cytoplasmic-facing. A helical transmembrane segment spans residues 258-278 (VVLLLQGLSLLELLDFPPLFW). Residues 279 to 281 (VLD) are Lumenal-facing. Residues 282 to 302 (AHAIWHISTIPVHVLFFSFLE) traverse the membrane as a helical segment. The Cytoplasmic portion of the chain corresponds to 303-319 (DDSLYLLKESEAKVKLD).

Belongs to the PGAP3 family.

The protein localises to the golgi apparatus membrane. Its function is as follows. Involved in the fatty acid remodeling steps of GPI-anchor maturation where the unsaturated acyl chain at sn-2 of inositol phosphate is replaced by a saturated stearoyl chain. May catalyze the first step of the fatty acid remodeling, by removing the unsaturated acyl chain at sn-2 of inositol phosphate, generating a lyso-GPI intermediate. The fatty acid remodeling steps is critical for the integration of GPI-APs into lipid rafts. This chain is GPI-specific phospholipase A2-like PGAP3, found in Bos taurus (Bovine).